Reading from the N-terminus, the 282-residue chain is Shikimate dehydrogenase (NADP(+)) (282 aa).

Residues 16-18 and Thr-63 each bind shikimate; that span reads SLS. Catalysis depends on Lys-67, which acts as the Proton acceptor. Shikimate contacts are provided by Asn-88 and Asp-103. NADP(+) contacts are provided by residues 128–132 and Gly-243; that span reads GAGGA.

The protein belongs to the shikimate dehydrogenase family. In terms of assembly, homodimer.

The enzyme catalyses shikimate + NADP(+) = 3-dehydroshikimate + NADPH + H(+). It functions in the pathway metabolic intermediate biosynthesis; chorismate biosynthesis; chorismate from D-erythrose 4-phosphate and phosphoenolpyruvate: step 4/7. Involved in the biosynthesis of the chorismate, which leads to the biosynthesis of aromatic amino acids. Catalyzes the reversible NADPH linked reduction of 3-dehydroshikimate (DHSA) to yield shikimate (SA). This Xylella fastidiosa (strain Temecula1 / ATCC 700964) protein is Shikimate dehydrogenase (NADP(+)).